Consider the following 361-residue polypeptide: D-alanine--D-alanine ligase (361 aa).

The ATP-grasp domain maps to 134-344; that stretch reads KILAQRAGVP…YTDLITKLID (211 aa). ATP is bound at residue 169-224; that stretch reads ASQLGSDLFVKPSNQGSSVGVSHVTNEKEYKVALAEAFKYDDKVLVEETVHGTEVE. 3 residues coordinate Mg(2+): D297, E311, and N313.

This sequence belongs to the D-alanine--D-alanine ligase family. Mg(2+) is required as a cofactor. It depends on Mn(2+) as a cofactor.

The protein resides in the cytoplasm. The catalysed reaction is 2 D-alanine + ATP = D-alanyl-D-alanine + ADP + phosphate + H(+). It participates in cell wall biogenesis; peptidoglycan biosynthesis. Functionally, cell wall formation. The protein is D-alanine--D-alanine ligase of Lactobacillus gasseri (strain ATCC 33323 / DSM 20243 / BCRC 14619 / CIP 102991 / JCM 1131 / KCTC 3163 / NCIMB 11718 / NCTC 13722 / AM63).